Consider the following 206-residue polypeptide: Outer-membrane lipoprotein LolB (206 aa).

The N-terminal stretch at 1–18 (MSLLKNLLAPCLALLLAG) is a signal peptide. Residue C19 is the site of N-palmitoyl cysteine attachment. A lipid anchor (S-diacylglycerol cysteine) is attached at C19.

The protein belongs to the LolB family. Monomer.

The protein resides in the cell outer membrane. Plays a critical role in the incorporation of lipoproteins in the outer membrane after they are released by the LolA protein. This Stutzerimonas stutzeri (strain A1501) (Pseudomonas stutzeri) protein is Outer-membrane lipoprotein LolB.